A 66-amino-acid chain; its full sequence is Cell division protein FtsB (66 aa).

The Cytoplasmic portion of the chain corresponds to M1–M3. Residues L4–I21 form a helical membrane-spanning segment. The Extracellular portion of the chain corresponds to G22–N66. A coiled-coil region spans residues V38 to N66.

Belongs to the FtsB family.

It localises to the cell membrane. In terms of biological role, essential cell division protein. May link together the upstream cell division proteins, which are predominantly cytoplasmic, with the downstream cell division proteins, which are predominantly extracellular. The protein is Cell division protein FtsB of Buchnera aphidicola subsp. Schizaphis graminum (strain Sg).